A 203-amino-acid chain; its full sequence is Guanylate kinase (203 aa).

Residues 4–183 (GKLFVISAPS…ASTLLKSIIW (180 aa)) form the Guanylate kinase-like domain. 11–18 (APSGAGKT) lines the ATP pocket.

The protein belongs to the guanylate kinase family.

It is found in the cytoplasm. It catalyses the reaction GMP + ATP = GDP + ADP. Its function is as follows. Essential for recycling GMP and indirectly, cGMP. This is Guanylate kinase from Desulfotalea psychrophila (strain LSv54 / DSM 12343).